A 326-amino-acid polypeptide reads, in one-letter code: Fructokinase (326 aa).

Residues 275–326 (EQALRNGPDPRRQSRRRHRLPRRRQSTLGARDWSLRLEQDSDPHPPDDTFSP) form a disordered region. Residues 287–299 (QSRRRHRLPRRRQ) show a composition bias toward basic residues. Residues 307–326 (WSLRLEQDSDPHPPDDTFSP) are compositionally biased toward basic and acidic residues.

It belongs to the carbohydrate kinase PfkB family.

The catalysed reaction is D-fructose + ATP = D-fructose 6-phosphate + ADP + H(+). This Rhizobium leguminosarum bv. trifolii protein is Fructokinase (frk).